We begin with the raw amino-acid sequence, 330 residues long: Beta-ketoacyl-[acyl-carrier-protein] synthase III (330 aa).

Catalysis depends on residues C115 and H255. Positions 256 to 260 (QANVR) are ACP-binding. Residue N285 is part of the active site.

It belongs to the thiolase-like superfamily. FabH family. In terms of assembly, homodimer.

The protein localises to the cytoplasm. It catalyses the reaction malonyl-[ACP] + acetyl-CoA + H(+) = 3-oxobutanoyl-[ACP] + CO2 + CoA. It participates in lipid metabolism; fatty acid biosynthesis. In terms of biological role, catalyzes the condensation reaction of fatty acid synthesis by the addition to an acyl acceptor of two carbons from malonyl-ACP. Catalyzes the first condensation reaction which initiates fatty acid synthesis and may therefore play a role in governing the total rate of fatty acid production. Possesses both acetoacetyl-ACP synthase and acetyl transacylase activities. Its substrate specificity determines the biosynthesis of branched-chain and/or straight-chain of fatty acids. The polypeptide is Beta-ketoacyl-[acyl-carrier-protein] synthase III (Symbiobacterium thermophilum (strain DSM 24528 / JCM 14929 / IAM 14863 / T)).